We begin with the raw amino-acid sequence, 221 residues long: Phosphoenolpyruvate guanylyltransferase (221 aa).

Residues Thr154, Gly169, and Ser172 each contribute to the phosphoenolpyruvate site.

This sequence belongs to the CofC family.

It carries out the reaction phosphoenolpyruvate + GTP + H(+) = enolpyruvoyl-2-diphospho-5'-guanosine + diphosphate. It participates in cofactor biosynthesis; coenzyme F420 biosynthesis. Guanylyltransferase that catalyzes the activation of phosphoenolpyruvate (PEP) as enolpyruvoyl-2-diphospho-5'-guanosine, via the condensation of PEP with GTP. It is involved in the biosynthesis of coenzyme F420, a hydride carrier cofactor. This Mycolicibacterium smegmatis (strain ATCC 700084 / mc(2)155) (Mycobacterium smegmatis) protein is Phosphoenolpyruvate guanylyltransferase.